The chain runs to 280 residues: MELCGFEVGLERALFLIAGPCVIESEQLALDTAGRLKEMTERLGIPFIYKSSFDKANRTAVESFRGLGMEAGLGILEKVKATLGVPVLTDVHEDTPLQEVAAVVDVLQTPAFLCRQTNFIQNVARQGRPVNIKKGQFLAPWDMKHVVEKARAVGNQQIMVCERGVSFGYNTLVSDMRSLAVMRDTGCPVVFDATHSVQQPGGKGGCSGGQREWVPVLARAAVAAGVAGVFMETHPDPERALSDGPNAWPLGAMEKLLETLSTIDKTVKTDGFLEAEYRLN.

Belongs to the KdsA family.

The protein localises to the cytoplasm. It catalyses the reaction D-arabinose 5-phosphate + phosphoenolpyruvate + H2O = 3-deoxy-alpha-D-manno-2-octulosonate-8-phosphate + phosphate. It participates in carbohydrate biosynthesis; 3-deoxy-D-manno-octulosonate biosynthesis; 3-deoxy-D-manno-octulosonate from D-ribulose 5-phosphate: step 2/3. Its pathway is bacterial outer membrane biogenesis; lipopolysaccharide biosynthesis. The sequence is that of 2-dehydro-3-deoxyphosphooctonate aldolase from Nitrosococcus oceani (strain ATCC 19707 / BCRC 17464 / JCM 30415 / NCIMB 11848 / C-107).